A 532-amino-acid polypeptide reads, in one-letter code: UDP-glucuronosyltransferase 1A4 (532 aa).

The signal sequence occupies residues 1–27; it reads MVLGVWITLWRLVRLLLLLCVLPWAEG. N-linked (GlcNAc...) asparagine glycosylation is found at Asn-141 and Asn-295. Residues 490 to 506 form a helical membrane-spanning segment; the sequence is VIGFLLAIVLTVAFVTF.

It belongs to the UDP-glycosyltransferase family. Homodimers. Homooligomer. Interacts with UGT1A1, UGT1A3, UGT1A6, UGT1A7, UGT1A8, UGT1A9 and UGT1A10 to form heterodimers.

It localises to the endoplasmic reticulum membrane. The enzyme catalyses glucuronate acceptor + UDP-alpha-D-glucuronate = acceptor beta-D-glucuronoside + UDP + H(+). It catalyses the reaction calcidiol + UDP-alpha-D-glucuronate = calcidiol 25-O-(beta-D-glucuronide) + UDP + H(+). The catalysed reaction is calcidiol + UDP-alpha-D-glucuronate = calcidiol 3-O-(beta-D-glucuronide) + UDP + H(+). It carries out the reaction calcitriol + UDP-alpha-D-glucuronate = calcitriol 25-O-(beta-D-glucuronide) + UDP + H(+). The enzyme catalyses (5Z,8Z,11Z,14Z)-eicosatetraenoate + UDP-alpha-D-glucuronate = O-[(5Z),(8Z),(11Z),(14Z)-eicosatetraenoyl]-beta-D-glucuronate + UDP. It catalyses the reaction 15-hydroxy-(5Z,8Z,11Z,13E)-eicosatetraenoate + UDP-alpha-D-glucuronate = 15-O-(beta-D-glucuronosyl)-(5Z,8Z,11Z,14Z)-eicosatetraenoate + UDP + H(+). The catalysed reaction is 20-hydroxy-(5Z,8Z,11Z,14Z)-eicosatetraenoate + UDP-alpha-D-glucuronate = 20-O-(beta-D-glucuronosyl)-(5Z,8Z,11Z,14Z)-eicosatetraenoate + UDP + H(+). Its function is as follows. UDP-glucuronosyltransferase (UGT) that catalyzes phase II biotransformation reactions in which lipophilic substrates are conjugated with glucuronic acid to increase the metabolite's water solubility, thereby facilitating excretion into either the urine or bile. Essential for the elimination and detoxification of drugs, xenobiotics and endogenous compounds. Involved in the glucuronidation of calcidiol, which is the major circulating form of vitamin D3 essential for the regulation of calcium and phosphate homeostasis. Also glucuronidates the biologically active form of vitamin D3, calcitriol, probably leading to its biliary transport and intestinal reabsorption. Involved in the glucuronidation of arachidonic acid (AA) and AA-derived eicosanoids including 15-HETE, 20-HETE and PGB1. In Oryctolagus cuniculus (Rabbit), this protein is UDP-glucuronosyltransferase 1A4 (Ugt1a4).